Here is a 146-residue protein sequence, read N- to C-terminus: Hemoglobin subunit beta (146 aa).

Positions 2 to 146 constitute a Globin domain; it reads HWTETERATI…VVAALSREYH (145 aa). Residues H63 and H92 each contribute to the heme b site.

Belongs to the globin family. Heterotetramer of two alpha chains and two beta chains (an easy dimerization is also reported). Red blood cells.

Functionally, involved in oxygen transport from the lung to the various peripheral tissues. The chain is Hemoglobin subunit beta (HBB) from Latimeria chalumnae (Coelacanth).